Reading from the N-terminus, the 509-residue chain is Solute carrier family 2, facilitated glucose transporter member 4 (509 aa).

The Cytoplasmic portion of the chain corresponds to 1 to 24 (MPSGFQQIGSEDGEPPQQRVTGTL). The tract at residues 7–13 (QIGSEDG) is interaction with SRFBP1. Position 10 is a phosphoserine (Ser10). The helical transmembrane segment at 25–45 (VLAVFSAVLGSLQFGYNIGVI) threads the bilayer. At 46-81 (NAPQKVIEQSYNETWLGRQGPEGPSSIPPGTLTTLW) the chain is on the extracellular side. Asn57 carries N-linked (GlcNAc...) asparagine glycosylation. Residues 82–102 (ALSVAIFSVGGMISSFLIGII) traverse the membrane as a helical segment. The Cytoplasmic portion of the chain corresponds to 103 to 111 (SQWLGRKRA). A helical transmembrane segment spans residues 112-132 (MLVNNVLAVLGGSLMGLANAA). Topologically, residues 133-142 (ASYEMLILGR) are extracellular. The chain crosses the membrane as a helical span at residues 143–163 (FLIGAYSGLTSGLVPMYVGEI). At 164 to 171 (APTHLRGA) the chain is on the cytoplasmic side. A helical transmembrane segment spans residues 172–192 (LGTLNQLAIVIGILIAQVLGL). Residue Gln177 coordinates D-glucose. The Extracellular segment spans residues 193–201 (ESLLGTASL). A helical transmembrane segment spans residues 202-222 (WPLLLGLTVLPALLQLVLLPF). Cys223 carries S-palmitoyl cysteine lipidation. The Cytoplasmic segment spans residues 223–287 (CPESPRYLYI…LLGSRTHRQP (65 aa)). Residue Ser274 is modified to Phosphoserine; by SGK1. A helical transmembrane segment spans residues 288–308 (LIIAVVLQLSQQLSGINAVFY). D-glucose-binding positions include 298 to 299 (QQ) and Asn304. At 309–323 (YSTSIFETAGVGQPA) the chain is on the extracellular side. The chain crosses the membrane as a helical span at residues 324–344 (YATIGAGVVNTVFTLVSVLLV). Asn333 contributes to the D-glucose binding site. Over 345 to 353 (ERAGRRTLH) the chain is Cytoplasmic. Residues 354–374 (LLGLAGMCGCAILMTVALLLL) traverse the membrane as a helical segment. Over 375-384 (ERVPAMSYVS) the chain is Extracellular. A helical transmembrane segment spans residues 385–405 (IVAIFGFVAFFEIGPGPIPWF). Glu396 and Trp404 together coordinate D-glucose. The Cytoplasmic portion of the chain corresponds to 406-417 (IVAELFSQGPRP). Residues 418 to 438 (AAMAVAGFSNWTSNFIIGMGF) form a helical membrane-spanning segment. Topologically, residues 439–445 (QYVAEAM) are extracellular. A helical membrane pass occupies residues 446 to 466 (GPYVFLLFAVLLLGFFIFTFL). At 467–509 (RVPETRGRTFDQISAAFHRTPSLLEQEVKPSTELEYLGPDEND) the chain is on the cytoplasmic side. Thr486 is subject to Phosphothreonine. At Ser488 the chain carries Phosphoserine. The short motif at 489–490 (LL) is the Dileucine internalization motif element.

Belongs to the major facilitator superfamily. Sugar transporter (TC 2.A.1.1) family. Glucose transporter subfamily. As to quaternary structure, interacts with NDUFA9. Binds to DAXX. Interacts via its N-terminus with SRFBP1. Interacts with TRARG1; the interaction is required for proper SLC2A4 recycling after insulin stimulation. Sumoylated. In terms of processing, palmitoylated. Palmitoylation by ZDHHC7 controls the insulin-dependent translocation of GLUT4 to the plasma membrane. Skeletal and cardiac muscles; brown and white fat.

Its subcellular location is the cell membrane. The protein resides in the endomembrane system. It is found in the cytoplasm. It localises to the perinuclear region. It catalyses the reaction D-glucose(out) = D-glucose(in). Its function is as follows. Insulin-regulated facilitative glucose transporter, which plays a key role in removal of glucose from circulation. Response to insulin is regulated by its intracellular localization: in the absence of insulin, it is efficiently retained intracellularly within storage compartments in muscle and fat cells. Upon insulin stimulation, translocates from these compartments to the cell surface where it transports glucose from the extracellular milieu into the cell. This is Solute carrier family 2, facilitated glucose transporter member 4 from Homo sapiens (Human).